The following is a 157-amino-acid chain: Stalk-specific protein A (157 aa).

The first 19 residues, 1-19 (MRSILILLSLLLTIAFASA), serve as a signal peptide directing secretion.

The protein resides in the secreted. This is Stalk-specific protein A (staA) from Dictyostelium discoideum (Social amoeba).